Reading from the N-terminus, the 471-residue chain is Sestrin-2 (471 aa).

The residue at position 1 (Met1) is an N-acetylmethionine. The tract at residues 57–230 (GLEALMSSGR…APSPPSEQST (174 aa)) is N-terminal domain; mediates the alkylhydroperoxide reductase activity. Cys116 acts as the Cysteine sulfenic acid (-SOH) intermediate in catalysis. Lys166 participates in a covalent cross-link: Glycyl lysine isopeptide (Lys-Gly) (interchain with G-Cter in ubiquitin). The segment at 212–241 (DPEGSPAPQAPSPPSEQSTPPSRDSLNHSG) is disordered. Ser240 bears the Phosphoserine mark. A C-terminal domain; mediates TORC1 regulation region spans residues 299 to 471 (ANPDMLCFVE…ALRAITRYMT (173 aa)). Residues 365-368 (TYNT), Thr377, and Glu442 each bind L-leucine.

This sequence belongs to the sestrin family. Interacts with the GATOR2 complex which is composed of MIOS, SEC13, SEH1L, WDR24 and WDR59; the interaction is negatively regulated by leucine. Conveys leucine availability via direct interaction with SEH1L and WDR24 components of the GATOR2 complex. Interacts with RRAGA, RRAGB, RRAGC and RRAGD; may function as a guanine nucleotide dissociation inhibitor for RRAGs and regulate them. May interact with the TORC2 complex. Interacts with KEAP1, RBX1, SQSTM and ULK1; to regulate the degradation of KEAP1. May also associate with the complex composed of TSC1, TSC2 and the AMP-responsive protein kinase/AMPK to regulate TORC1 signaling. May interact with PRDX1. Phosphorylated by ULK1 at multiple sites. Post-translationally, ubiquitinated at Lys-166 by RNF167 via 'Lys-63'-linked polyubiquitination in response to leucine deprivation: ubiquitination promotes SESN2-interaction with the GATOR2 complex, leading to inhibit the TORC1 signaling pathway. Deubiquitinated at Lys-166 by STAMBPL1, promoting the TORC1 signaling pathway. Ubiquitinated by RNF186; ubiquitination mediates proteasomal degradation.

It is found in the cytoplasm. The enzyme catalyses a hydroperoxide + L-cysteinyl-[protein] = S-hydroxy-L-cysteinyl-[protein] + an alcohol. In terms of biological role, functions as an intracellular leucine sensor that negatively regulates the mTORC1 signaling pathway through the GATOR complex. In absence of leucine, binds the GATOR subcomplex GATOR2 and prevents mTORC1 signaling. Binding of leucine to SESN2 disrupts its interaction with GATOR2 thereby activating the TORC1 signaling pathway. This stress-inducible metabolic regulator also plays a role in protection against oxidative and genotoxic stresses. May negatively regulate protein translation in response to endoplasmic reticulum stress, via mTORC1. May positively regulate the transcription by NFE2L2 of genes involved in the response to oxidative stress by facilitating the SQSTM1-mediated autophagic degradation of KEAP1. May also mediate TP53 inhibition of TORC1 signaling upon genotoxic stress. Moreover, may prevent the accumulation of reactive oxygen species (ROS) through the alkylhydroperoxide reductase activity born by the N-terminal domain of the protein. Was originally reported to contribute to oxidative stress resistance by reducing PRDX1. However, this could not be confirmed. This chain is Sestrin-2, found in Bos taurus (Bovine).